Here is a 226-residue protein sequence, read N- to C-terminus: 3-dehydroquinate dehydratase (226 aa).

Residues 33-35 (EWR) and R65 contribute to the 3-dehydroquinate site. Residue H121 is the Proton donor/acceptor of the active site. The active-site Schiff-base intermediate with substrate is the K146. Residues R188, S207, and Q211 each contribute to the 3-dehydroquinate site.

It belongs to the type-I 3-dehydroquinase family. In terms of assembly, homodimer.

The catalysed reaction is 3-dehydroquinate = 3-dehydroshikimate + H2O. It participates in metabolic intermediate biosynthesis; chorismate biosynthesis; chorismate from D-erythrose 4-phosphate and phosphoenolpyruvate: step 3/7. Its function is as follows. Involved in the third step of the chorismate pathway, which leads to the biosynthesis of aromatic amino acids. Catalyzes the cis-dehydration of 3-dehydroquinate (DHQ) and introduces the first double bond of the aromatic ring to yield 3-dehydroshikimate. In Lactococcus lactis subsp. lactis (strain IL1403) (Streptococcus lactis), this protein is 3-dehydroquinate dehydratase.